Reading from the N-terminus, the 428-residue chain is C4-dicarboxylate transport protein (428 aa).

9 helical membrane-spanning segments follow: residues 4–24 (SLFKSLYFQVLTAIAIGILLG), 44–64 (LIKMIIAPVIFCTVVTGIAGM), 76–96 (VALLYFEIVSTIALIIGLIIV), 142–162 (IGAFASGNILQVLLFAVLFGF), 184–204 (VIFGIINMIMRLAPIGAFGAM), 222–242 (LIICFYITCILFVVVVLGTIA), 289–309 (VVGLVIPTGYSFNLDGTSIYL), 326–346 (IFHQITLLVVLLLSSKGAAGV), and 352–372 (IVLAATISAVGHLPVAGLALI).

This sequence belongs to the dicarboxylate/amino acid:cation symporter (DAACS) (TC 2.A.23) family.

Its subcellular location is the cell inner membrane. Functionally, responsible for the transport of dicarboxylates such as succinate, fumarate, and malate from the periplasm across the membrane. The protein is C4-dicarboxylate transport protein of Salmonella arizonae (strain ATCC BAA-731 / CDC346-86 / RSK2980).